We begin with the raw amino-acid sequence, 1489 residues long: ABC transporter FUM19 (1489 aa).

Transmembrane regions (helical) follow at residues Ile-33–Val-53, Cys-84–Tyr-104, Leu-116–Trp-136, Leu-143–Trp-163, Leu-264–Leu-284, Trp-302–Tyr-322, Phe-373–Leu-393, Val-397–Ile-417, Ile-482–Ala-502, and His-511–Phe-531. Positions Ile-272–Ser-539 constitute an ABC transmembrane type-1 1 domain. The ABC transporter 1 domain maps to Val-591 to Ile-823. N-linked (GlcNAc...) asparagine glycans are attached at residues Asn-612 and Asn-616. Gly-625–Ser-632 contacts ATP. Asn-670 carries N-linked (GlcNAc...) asparagine glycosylation. Residues Glu-852 to Asp-862 show a composition bias toward basic and acidic residues. The segment at Glu-852–Ser-874 is disordered. A compositionally biased stretch (polar residues) spans Asn-863–Ser-874. 6 helical membrane passes run Ala-890 to Tyr-910, Ile-945 to Ile-965, Ala-977 to Ser-999, Ala-1031 to Val-1051, Trp-1120 to Val-1140, and Gly-1149 to Val-1169. The ABC transmembrane type-1 2 domain maps to Ser-902–Ala-1187. The region spanning Ile-1214–Glu-1485 is the ABC transporter 2 domain. ATP is bound at residue Gly-1254 to Ser-1261.

Belongs to the ABC transporter superfamily. ABCC family. Conjugate transporter (TC 3.A.1.208) subfamily.

It localises to the cell membrane. Functionally, ABC transporter that may provide the dual role of fumonisin export and self-protection by allowing the fungus to evade the harmful effect of its own fumonisin production. Plays a role in the repression of the gene cluster that mediates fumonisin biosynthesis. The protein is ABC transporter FUM19 of Gibberella moniliformis (strain M3125 / FGSC 7600) (Maize ear and stalk rot fungus).